The following is a 1273-amino-acid chain: ABC transporter B family member 2 (1273 aa).

A signal peptide spans 1–30 (MYISLIFFLSNHFPPLISIPIFIFLSFSSP). 7 helical membrane passes run 66-86 (FSFA…GACI), 91-111 (VPIF…AYLF), 126-146 (FVYL…CWMH), 209-229 (FIAG…VTLS), 230-250 (IVPL…GLIA), 305-325 (GLGL…LVWF), and 345-365 (LNVV…SAFV). Residues 77–366 (MTLGSVGACI…AAPDISAFVR (290 aa)) form the ABC transmembrane type-1 1 domain. One can recognise an ABC transporter 1 domain in the interval 401-637 (IQFKDATFSY…PDGAYSSLLR (237 aa)). 436-443 (GGSGSGKS) provides a ligand contact to ATP. N-linked (GlcNAc...) asparagine glycosylation is found at asparagine 466 and asparagine 651. The ABC transmembrane type-1 2 domain maps to 710-997 (GVCGTICAFI…TLALAPDLLK (288 aa)). A run of 2 helical transmembrane segments spans residues 711 to 731 (VCGT…ALGV) and 752 to 772 (IAIL…IEHI). The N-linked (GlcNAc...) asparagine glycan is linked to asparagine 806. 3 helical membrane passes run 832-852 (ILLQ…ILNW), 934-954 (IAGL…GLAL), and 975-995 (FMVL…APDL). Positions 1030–1266 (IELKGVHFSY…KSGPYFKLIS (237 aa)) constitute an ABC transporter 2 domain. 1065-1072 (GQSGSGKS) provides a ligand contact to ATP. N-linked (GlcNAc...) asparagine glycans are attached at residues asparagine 1217 and asparagine 1256.

Belongs to the ABC transporter superfamily. ABCB family. Multidrug resistance exporter (TC 3.A.1.201) subfamily. Interacts with 1-naphthylphthalamic acid (NPA).

Its subcellular location is the membrane. The sequence is that of ABC transporter B family member 2 (ABCB2) from Arabidopsis thaliana (Mouse-ear cress).